Here is a 588-residue protein sequence, read N- to C-terminus: Adenine deaminase (588 aa).

Belongs to the metallo-dependent hydrolases superfamily. Adenine deaminase family. In terms of assembly, homodimer. It depends on Mn(2+) as a cofactor.

The catalysed reaction is adenine + H2O + H(+) = hypoxanthine + NH4(+). This Escherichia coli O6:H1 (strain CFT073 / ATCC 700928 / UPEC) protein is Adenine deaminase.